The following is a 189-amino-acid chain: Elongation factor P (189 aa).

It belongs to the elongation factor P family.

The protein resides in the cytoplasm. It participates in protein biosynthesis; polypeptide chain elongation. In terms of biological role, involved in peptide bond synthesis. Stimulates efficient translation and peptide-bond synthesis on native or reconstituted 70S ribosomes in vitro. Probably functions indirectly by altering the affinity of the ribosome for aminoacyl-tRNA, thus increasing their reactivity as acceptors for peptidyl transferase. The chain is Elongation factor P from Pseudomonas putida (strain GB-1).